The chain runs to 244 residues: Probable transcriptional regulatory protein Dgeo_2194 (244 aa).

The disordered stretch occupies residues 1 to 21; the sequence is MAGHSKWAQIKRKKGANDKKR.

This sequence belongs to the TACO1 family.

It localises to the cytoplasm. The protein is Probable transcriptional regulatory protein Dgeo_2194 of Deinococcus geothermalis (strain DSM 11300 / CIP 105573 / AG-3a).